Consider the following 339-residue polypeptide: Heat-inducible transcription repressor HrcA (339 aa).

Belongs to the HrcA family.

Its function is as follows. Negative regulator of class I heat shock genes (grpE-dnaK-dnaJ and groELS operons). Prevents heat-shock induction of these operons. The polypeptide is Heat-inducible transcription repressor HrcA (Cutibacterium acnes (strain DSM 16379 / KPA171202) (Propionibacterium acnes)).